Consider the following 81-residue polypeptide: Gamma-conotoxin-like TxMEKL-0511 (81 aa).

The N-terminal stretch at 1–19 is a signal peptide; it reads MEKLTILLLVAAVLLSIQA. A propeptide spanning residues 20 to 45 is cleaved from the precursor; that stretch reads LNQEKHQRAKINLLSKRKPPAERWWR. 3 disulfide bridges follow: cysteine 49–cysteine 63, cysteine 56–cysteine 67, and cysteine 62–cysteine 72.

This sequence belongs to the conotoxin O2 superfamily. Expressed by the venom duct.

It is found in the secreted. In terms of biological role, gamma-conotoxins may act on voltage-gated non-specific cation pacemaker channels (HCN). This chain is Gamma-conotoxin-like TxMEKL-0511, found in Conus textile (Cloth-of-gold cone).